The sequence spans 285 residues: Chemotaxis protein LafT (285 aa).

4 helical membrane-spanning segments follow: residues 4–23 (FLGVLTILVCVFGGYMWAGG), 34–51 (FLIIIGAAAGSLIIGNPP), 171–191 (ALPGFGILAAVGGIIITMQAI), and 201–222 (HVAAALVGTFIGIFGCYCGLDP). The Cytoplasmic segment spans residues 223 to 285 (LSNAMAQRVK…MEKWLAEQEG (63 aa)).

The protein belongs to the MotA family.

The protein resides in the cell inner membrane. In terms of biological role, required for rotation of the flagellar motor. Probable transmembrane proton channel. The polypeptide is Chemotaxis protein LafT (lafT) (Vibrio parahaemolyticus serotype O3:K6 (strain RIMD 2210633)).